The sequence spans 262 residues: Shikimate dehydrogenase (NADP(+)) (262 aa).

Shikimate-binding positions include 15 to 17 (SRS) and Thr62. Lys66 (proton acceptor) is an active-site residue. Glu78 lines the NADP(+) pocket. 2 residues coordinate shikimate: Asn87 and Asp102. Residues 126 to 130 (GAGGA), 150 to 155 (NRTLAR), and Met214 each bind NADP(+). Tyr216 provides a ligand contact to shikimate. Gly236 provides a ligand contact to NADP(+).

Belongs to the shikimate dehydrogenase family. As to quaternary structure, homodimer.

The catalysed reaction is shikimate + NADP(+) = 3-dehydroshikimate + NADPH + H(+). It participates in metabolic intermediate biosynthesis; chorismate biosynthesis; chorismate from D-erythrose 4-phosphate and phosphoenolpyruvate: step 4/7. Involved in the biosynthesis of the chorismate, which leads to the biosynthesis of aromatic amino acids. Catalyzes the reversible NADPH linked reduction of 3-dehydroshikimate (DHSA) to yield shikimate (SA). The chain is Shikimate dehydrogenase (NADP(+)) from Acinetobacter baumannii (strain AB307-0294).